The chain runs to 157 residues: uncharacterized protein (157 aa).

Disordered stretches follow at residues 76–105 and 132–157; these read AINQELHLTPHKKTSPATSSSLKPRPGPRG and VRAPSTKPSKTSSSNNPWPLTPRMRG. Over residues 135–148 the composition is skewed to low complexity; the sequence is PSTKPSKTSSSNNP.

This sequence to M.pneumoniae MPN_091 and MPN_413.

This is an uncharacterized protein from Mycoplasma pneumoniae (strain ATCC 29342 / M129 / Subtype 1) (Mycoplasmoides pneumoniae).